We begin with the raw amino-acid sequence, 277 residues long: Hemin import ATP-binding protein HmuV (277 aa).

Positions 19–259 (VEVADLNYSV…AIIEEAFGHR (241 aa)) constitute an ABC transporter domain. 51–58 (GRNGAGKS) lines the ATP pocket.

It belongs to the ABC transporter superfamily. Heme (hemin) importer (TC 3.A.1.14.5) family. As to quaternary structure, the complex is composed of two ATP-binding proteins (HmuV), two transmembrane proteins (HmuU) and a solute-binding protein (HmuT).

The protein resides in the cell membrane. In terms of biological role, part of the ABC transporter complex HmuTUV involved in hemin import. Responsible for energy coupling to the transport system. This Deinococcus geothermalis (strain DSM 11300 / CIP 105573 / AG-3a) protein is Hemin import ATP-binding protein HmuV.